The primary structure comprises 232 residues: Large ribosomal subunit protein uL1 (232 aa).

This sequence belongs to the universal ribosomal protein uL1 family. In terms of assembly, part of the 50S ribosomal subunit.

Functionally, binds directly to 23S rRNA. The L1 stalk is quite mobile in the ribosome, and is involved in E site tRNA release. Protein L1 is also a translational repressor protein, it controls the translation of the L11 operon by binding to its mRNA. In Xylella fastidiosa (strain 9a5c), this protein is Large ribosomal subunit protein uL1.